Reading from the N-terminus, the 185-residue chain is Ribosome-recycling factor (185 aa).

It belongs to the RRF family.

It is found in the cytoplasm. Functionally, responsible for the release of ribosomes from messenger RNA at the termination of protein biosynthesis. May increase the efficiency of translation by recycling ribosomes from one round of translation to another. The polypeptide is Ribosome-recycling factor (Campylobacter hominis (strain ATCC BAA-381 / DSM 21671 / CCUG 45161 / LMG 19568 / NCTC 13146 / CH001A)).